Reading from the N-terminus, the 393-residue chain is NADH-quinone oxidoreductase subunit D (393 aa).

The protein belongs to the complex I 49 kDa subunit family. NDH-1 is composed of 14 different subunits. Subunits NuoB, C, D, E, F, and G constitute the peripheral sector of the complex.

Its subcellular location is the cell inner membrane. The enzyme catalyses a quinone + NADH + 5 H(+)(in) = a quinol + NAD(+) + 4 H(+)(out). In terms of biological role, NDH-1 shuttles electrons from NADH, via FMN and iron-sulfur (Fe-S) centers, to quinones in the respiratory chain. The immediate electron acceptor for the enzyme in this species is believed to be ubiquinone. Couples the redox reaction to proton translocation (for every two electrons transferred, four hydrogen ions are translocated across the cytoplasmic membrane), and thus conserves the redox energy in a proton gradient. The chain is NADH-quinone oxidoreductase subunit D from Ehrlichia ruminantium (strain Welgevonden).